Consider the following 474-residue polypeptide: 6-phospho-beta-galactosidase (474 aa).

Residues Gln-19, His-116, Asn-159, Glu-160, and Asn-297 each contribute to the D-galactose 6-phosphate site. Glu-160 (proton donor) is an active-site residue. The Nucleophile role is filled by Glu-375. The D-galactose 6-phosphate site is built by Ser-433, Trp-434, Lys-440, and Tyr-442.

Belongs to the glycosyl hydrolase 1 family.

The catalysed reaction is a 6-phospho-beta-D-galactoside + H2O = D-galactose 6-phosphate + an alcohol. The protein operates within carbohydrate metabolism; lactose degradation; D-galactose 6-phosphate and beta-D-glucose from lactose 6-phosphate: step 1/1. The polypeptide is 6-phospho-beta-galactosidase (Lacticaseibacillus rhamnosus (Lactobacillus rhamnosus)).